Reading from the N-terminus, the 164-residue chain is Class I hydrophobin rodA (164 aa).

Positions 1 to 18 (MRFSISALVLGLAATVYA) are cleaved as a signal peptide. Residue Asn-50 is glycosylated (N-linked (GlcNAc...) asparagine). 4 disulfides stabilise this stretch: Cys-60–Cys-138, Cys-68–Cys-132, Cys-69–Cys-109, and Cys-139–Cys-157.

Belongs to the fungal hydrophobin family. Self-assembles to form functional amyloid fibrils called rodlets. Self-assembly into fibrillar rodlets occurs spontaneously at hydrophobic:hydrophilic interfaces and the rodlets further associate laterally to form amphipathic monolayers.

The protein resides in the secreted. It is found in the cell wall. Functionally, aerial growth, conidiation, and dispersal of filamentous fungi in the environment rely upon a capability of their secreting small amphipathic proteins called hydrophobins (HPBs) with low sequence identity. Class I can self-assemble into an outermost layer of rodlet bundles on aerial cell surfaces, conferring cellular hydrophobicity that supports fungal growth, development and dispersal; whereas Class II form highly ordered films at water-air interfaces through intermolecular interactions but contribute nothing to the rodlet structure. RodA is a class I hydrophobin involved in the cell surface hydrophobicity and conidiation under aerial conditions. The surface rodlet layer of the conidial cell wall makes airborne conidia of filamentous fungi inert to both innate and adaptive immunity. This Penicillium camembertii protein is Class I hydrophobin rodA.